The chain runs to 341 residues: Mytilin-2 (341 aa).

A signal peptide spans 1–24; it reads MFKQSYQLCLVFLLFVCFYQSVKG.

Component of the organic matrix of calcified shell layers like nacre and prisms.

The protein localises to the secreted. The sequence is that of Mytilin-2 from Mytilus californianus (California mussel).